The chain runs to 160 residues: Globin-like protein (160 aa).

Positions S2 to K152 constitute a Globin domain. Residue H101 coordinates heme.

Belongs to the globin family.

Its subcellular location is the cytoplasm. May be a globin and may play a role in oxygen transport. The chain is Globin-like protein (glb-1) from Caenorhabditis briggsae.